The chain runs to 188 residues: Large ribosomal subunit protein uL22 (188 aa).

Residues 155 to 188 (STPEGAKKGKKKKGTKDAVEKSSKRVKTAATAAH) are disordered.

It belongs to the universal ribosomal protein uL22 family.

The chain is Large ribosomal subunit protein uL22 (RpL17) from Agriotes lineatus (Lined click beetle).